Consider the following 493-residue polypeptide: Lysine--tRNA ligase (493 aa).

Residues Glu-404 and Glu-411 each contribute to the Mg(2+) site.

The protein belongs to the class-II aminoacyl-tRNA synthetase family. In terms of assembly, homodimer. The cofactor is Mg(2+).

Its subcellular location is the cytoplasm. The catalysed reaction is tRNA(Lys) + L-lysine + ATP = L-lysyl-tRNA(Lys) + AMP + diphosphate. This Oceanobacillus iheyensis (strain DSM 14371 / CIP 107618 / JCM 11309 / KCTC 3954 / HTE831) protein is Lysine--tRNA ligase.